The primary structure comprises 158 residues: Endoribonuclease YbeY (158 aa).

Histidine 117, histidine 121, and histidine 127 together coordinate Zn(2+).

This sequence belongs to the endoribonuclease YbeY family. Zn(2+) is required as a cofactor.

It is found in the cytoplasm. Single strand-specific metallo-endoribonuclease involved in late-stage 70S ribosome quality control and in maturation of the 3' terminus of the 16S rRNA. This is Endoribonuclease YbeY from Francisella philomiragia subsp. philomiragia (strain ATCC 25017 / CCUG 19701 / FSC 153 / O#319-036).